Reading from the N-terminus, the 53-residue chain is Unknown protein from 2D-PAGE of needles (53 aa).

The protein is Unknown protein from 2D-PAGE of needles of Pinus pinaster (Maritime pine).